We begin with the raw amino-acid sequence, 506 residues long: Maturase K (506 aa).

Belongs to the intron maturase 2 family. MatK subfamily.

It is found in the plastid. Its subcellular location is the chloroplast. Its function is as follows. Usually encoded in the trnK tRNA gene intron. Probably assists in splicing its own and other chloroplast group II introns. This chain is Maturase K, found in Crataegus monogyna (Hawthorn).